The primary structure comprises 248 residues: Metallo-beta-lactamase type 2 (248 aa).

Positions 1–21 are cleaved as a signal peptide; that stretch reads MKGLKGLLVLALGFTGLQVFG. His97, His99, Asp101, His160, and Cys179 together coordinate Zn(2+). Lys182 contributes to the substrate binding site. His221 serves as a coordination point for Zn(2+).

The protein belongs to the metallo-beta-lactamase superfamily. Class-B beta-lactamase family. As to quaternary structure, monomer. Zn(2+) serves as cofactor.

The protein resides in the periplasm. The catalysed reaction is a beta-lactam + H2O = a substituted beta-amino acid. In terms of biological role, confers resistance to the different beta-lactams antibiotics (penicillin, cephalosporin and carbapenem) via the hydrolysis of the beta-lactam ring. This is Metallo-beta-lactamase type 2 (blaB7) from Elizabethkingia meningoseptica (Chryseobacterium meningosepticum).